We begin with the raw amino-acid sequence, 318 residues long: MNLNYLDFEQPIAVLEGKIQELQLVGTDNDLNISEEIDRLKEKSTKLTENIYSSLTPWQIVQVARHPQRPYSADYIARMFDDWDELHGDRHFGDDKAIIGGVGRLNGRPVMVIGEEKGRSVKEKVERNFGMPKPEGYRKALRLMEMAERFKMPVLTLIDTPGAYPGIDSEERGISESIAQNLAVMSRLRTPIICTVIGEGSSGGALAIGVGDYLNMLQYSTYFVISPEGCANIIWKTVEKAPLAAEAMGVTSSVLEELGIVDETIAEPLGGAHRDIDTMAEKLKTRLSEQLDQLVAEDMDSLLERRYKRLMSYGNAAS.

A CoA carboxyltransferase C-terminal domain is found at 36-293; it reads EIDRLKEKST…KTRLSEQLDQ (258 aa).

It belongs to the AccA family. In terms of assembly, acetyl-CoA carboxylase is a heterohexamer composed of biotin carboxyl carrier protein (AccB), biotin carboxylase (AccC) and two subunits each of ACCase subunit alpha (AccA) and ACCase subunit beta (AccD).

It localises to the cytoplasm. It carries out the reaction N(6)-carboxybiotinyl-L-lysyl-[protein] + acetyl-CoA = N(6)-biotinyl-L-lysyl-[protein] + malonyl-CoA. It functions in the pathway lipid metabolism; malonyl-CoA biosynthesis; malonyl-CoA from acetyl-CoA: step 1/1. Functionally, component of the acetyl coenzyme A carboxylase (ACC) complex. First, biotin carboxylase catalyzes the carboxylation of biotin on its carrier protein (BCCP) and then the CO(2) group is transferred by the carboxyltransferase to acetyl-CoA to form malonyl-CoA. The sequence is that of Acetyl-coenzyme A carboxylase carboxyl transferase subunit alpha from Teredinibacter turnerae (strain ATCC 39867 / T7901).